Here is a 611-residue protein sequence, read N- to C-terminus: Adenosylhomocysteinase 3 (611 aa).

3 stretches are compositionally biased toward low complexity: residues 1-14 (MSVQVVSAAAAAKV), 36-57 (AAVGAMAPPAGGGDPEAPAPAA), and 68-81 (GPAAALSPAAGKVP). The interval 1-184 (MSVQVVSAAA…KQQKNSKGSS (184 aa)) is disordered. Serine 2 carries the N-acetylserine modification. An LISN domain, inhibits interaction with ITPR1 region spans residues 2 to 109 (SVQVVSAAAA…DGGEALVSPD (108 aa)). Serine 107 bears the Phosphoserine mark. Residues 135 to 144 (RPTKIGRRSL) show a composition bias toward basic residues. Positions 145–164 (SRSISQSSTDSYSSAASYTD) are enriched in low complexity. Phosphoserine occurs at positions 149, 152, 155, and 158. Residues threonine 236, aspartate 310, and glutamate 335 each coordinate substrate. Position 336–338 (336–338 (SVT)) interacts with NAD(+). Substrate-binding residues include lysine 365 and aspartate 369. NAD(+)-binding positions include asparagine 370, 401–406 (GEVGKG), glutamate 422, asparagine 457, 478–479 (MG), and asparagine 525.

The protein belongs to the adenosylhomocysteinase family. As to quaternary structure, homotetramer. Forms heteromultimers with AHCYL1 (via the C-terminal region). Interacts with ITPR1; with lower affinity than AHCYL1 and maybe via ITPR1. Interacts with SLC4A4. Interacts with ZCCHC4. Requires NAD(+) as cofactor. Post-translationally, phosphorylated during neuronal differentiation at the LISN domain.

It is found in the cytoplasm. It localises to the microsome. It carries out the reaction S-adenosyl-L-homocysteine + H2O = L-homocysteine + adenosine. The protein operates within amino-acid biosynthesis; L-homocysteine biosynthesis; L-homocysteine from S-adenosyl-L-homocysteine: step 1/1. In terms of biological role, may regulate the electrogenic sodium/bicarbonate cotransporter SLC4A4 activity and Mg(2+)-sensitivity. On the contrary of its homolog AHCYL1, does not regulate ITPR1 sensitivity to inositol 1,4,5-trisphosphate. This is Adenosylhomocysteinase 3 (AHCYL2) from Homo sapiens (Human).